A 729-amino-acid polypeptide reads, in one-letter code: Putative cyclic nucleotide-gated ion channel 19 (729 aa).

Over 1 to 172 (MAHTRTFTSR…SKFVQVWTRV (172 aa)) the chain is Cytoplasmic. Residues 52–82 (SGPIHSTRRTEPLFSPSPQESPDSSSTVDVP) form a disordered region. Low complexity predominate over residues 67–81 (PSPQESPDSSSTVDV). Residues 173 to 193 (LAFSSLVAIFIDPLFFFLLLI) form a helical membrane-spanning segment. Over 194–208 (QQDNKCIAIDWRATK) the chain is Extracellular. Residues 209–229 (VLVSLRSITDLIFFINILLQF) traverse the membrane as a helical segment. Residues 230-261 (RLAYVAPESRIVGAGQLVDHPRKIARHYFRGK) lie on the Cytoplasmic side of the membrane. A helical transmembrane segment spans residues 262-282 (FLLDMFIVFPIPQIMILRIIP). At 283 to 295 (LHLGTRREESEKQ) the chain is on the extracellular side. A helical membrane pass occupies residues 296 to 316 (ILRATVLFQYIPKLYRLLPLL). At 317–332 (AGQTSTGFIFESAWAN) the chain is on the cytoplasmic side. A helical transmembrane segment spans residues 333 to 353 (FVINLLTFMLAGHAVGSCWYL). Residues 354–451 (SALQRVKKCM…STLAGNLSPS (98 aa)) lie on the Extracellular side of the membrane. The helical transmembrane segment at 452 to 472 (YSVGEVFFTMGIIGLGLLLFA) threads the bilayer. Over 473-729 (RLIGNMHNFL…LNTAHSNSNR (257 aa)) the chain is Cytoplasmic. Residues 560-677 (IFSL…VTSL) and E625 each bind a nucleoside 3',5'-cyclic phosphate. The interval 678–694 (FSRFLRSHRVQGAIRYE) is calmodulin-binding. Residues 699–728 (RLRAAMQIQVAWRYRKRQLQRLNTAHSNSN) form the IQ domain.

The protein belongs to the cyclic nucleotide-gated cation channel (TC 1.A.1.5) family. Homotetramer or heterotetramer.

The protein localises to the cell membrane. Its function is as follows. Putative cyclic nucleotide-gated ion channel. The protein is Putative cyclic nucleotide-gated ion channel 19 (CNGC19) of Arabidopsis thaliana (Mouse-ear cress).